Reading from the N-terminus, the 312-residue chain is Elongation factor Ts, mitochondrial (312 aa).

Belongs to the EF-Ts family.

The protein resides in the mitochondrion. Its function is as follows. Associates with the EF-Tu.GDP complex and induces the exchange of GDP to GTP. It remains bound to the aminoacyl-tRNA.EF-Tu.GTP complex up to the GTP hydrolysis stage on the ribosome. In Xenopus laevis (African clawed frog), this protein is Elongation factor Ts, mitochondrial (tsfm).